Here is a 134-residue protein sequence, read N- to C-terminus: STAG3-like protein 3 (134 aa).

The SCD domain occupies 10 to 95 (PKVTCRDVLP…GCFKDWMVSM (86 aa)).

The protein belongs to the SCC3 family.

The protein resides in the nucleus. In Homo sapiens (Human), this protein is STAG3-like protein 3 (STAG3L3).